A 119-amino-acid polypeptide reads, in one-letter code: Microtubule nucleation factor SSNA1 (119 aa).

Residue threonine 2 is modified to N-acetylthreonine. Positions 2–32 (TQQGAALQNYNNELVKCIEELCQKREELCRQ) are important for localization to the centrosome. Residues 13–70 (NELVKCIEELCQKREELCRQIQQEEDEKQRLQNEVRQLTEKLARVNENLARKIASRNE) adopt a coiled-coil conformation.

Belongs to the SSNA1 family. Self-associates to form fibrils. Also forms dimers as well as monomers. Interacts with SPAST.

It is found in the nucleus. Its subcellular location is the cytoplasm. The protein resides in the cytoskeleton. It localises to the microtubule organizing center. The protein localises to the centrosome. It is found in the centriole. Its subcellular location is the midbody. The protein resides in the flagellum basal body. It localises to the flagellum axoneme. The protein localises to the cell projection. It is found in the axon. Microtubule-binding protein which stabilizes dynamic microtubules by slowing growth and shrinkage at both plus and minus ends and serves as a sensor of microtubule damage, protecting microtubules from the microtubule-severing enzyme SPAST. Induces microtubule branching which is mediated by the formation of long SSNA1 fibrils which guide microtubule protofilaments to split apart from the mother microtubule and form daughter microtubules. Plays a role in axon outgrowth and branching. Required for cell division. This chain is Microtubule nucleation factor SSNA1, found in Mus musculus (Mouse).